The sequence spans 424 residues: Histidine--tRNA ligase (424 aa).

It belongs to the class-II aminoacyl-tRNA synthetase family. As to quaternary structure, homodimer.

The protein resides in the cytoplasm. It catalyses the reaction tRNA(His) + L-histidine + ATP = L-histidyl-tRNA(His) + AMP + diphosphate + H(+). The sequence is that of Histidine--tRNA ligase from Shigella sonnei (strain Ss046).